The chain runs to 252 residues: Aspartate/glutamate leucyltransferase (252 aa).

The protein belongs to the R-transferase family. Bpt subfamily.

The protein resides in the cytoplasm. The catalysed reaction is N-terminal L-glutamyl-[protein] + L-leucyl-tRNA(Leu) = N-terminal L-leucyl-L-glutamyl-[protein] + tRNA(Leu) + H(+). The enzyme catalyses N-terminal L-aspartyl-[protein] + L-leucyl-tRNA(Leu) = N-terminal L-leucyl-L-aspartyl-[protein] + tRNA(Leu) + H(+). Its function is as follows. Functions in the N-end rule pathway of protein degradation where it conjugates Leu from its aminoacyl-tRNA to the N-termini of proteins containing an N-terminal aspartate or glutamate. The polypeptide is Aspartate/glutamate leucyltransferase (Afipia carboxidovorans (strain ATCC 49405 / DSM 1227 / KCTC 32145 / OM5) (Oligotropha carboxidovorans)).